We begin with the raw amino-acid sequence, 178 residues long: Acireductone dioxygenase (178 aa).

Fe(2+) contacts are provided by His-100, His-102, Glu-106, and His-145. The Ni(2+) site is built by His-100, His-102, Glu-106, and His-145.

The protein belongs to the acireductone dioxygenase (ARD) family. As to quaternary structure, monomer. It depends on Fe(2+) as a cofactor. Ni(2+) is required as a cofactor.

The enzyme catalyses 1,2-dihydroxy-5-(methylsulfanyl)pent-1-en-3-one + O2 = 3-(methylsulfanyl)propanoate + CO + formate + 2 H(+). The catalysed reaction is 1,2-dihydroxy-5-(methylsulfanyl)pent-1-en-3-one + O2 = 4-methylsulfanyl-2-oxobutanoate + formate + 2 H(+). It functions in the pathway amino-acid biosynthesis; L-methionine biosynthesis via salvage pathway; L-methionine from S-methyl-5-thio-alpha-D-ribose 1-phosphate: step 5/6. Its function is as follows. Catalyzes 2 different reactions between oxygen and the acireductone 1,2-dihydroxy-3-keto-5-methylthiopentene (DHK-MTPene) depending upon the metal bound in the active site. Fe-containing acireductone dioxygenase (Fe-ARD) produces formate and 2-keto-4-methylthiobutyrate (KMTB), the alpha-ketoacid precursor of methionine in the methionine recycle pathway. Ni-containing acireductone dioxygenase (Ni-ARD) produces methylthiopropionate, carbon monoxide and formate, and does not lie on the methionine recycle pathway. The polypeptide is Acireductone dioxygenase (mtnD) (Bacillus subtilis (strain 168)).